We begin with the raw amino-acid sequence, 1358 residues long: DNA-directed RNA polymerase subunit beta (1358 aa).

This sequence belongs to the RNA polymerase beta chain family. The RNAP catalytic core consists of 2 alpha, 1 beta, 1 beta' and 1 omega subunit. When a sigma factor is associated with the core the holoenzyme is formed, which can initiate transcription.

The enzyme catalyses RNA(n) + a ribonucleoside 5'-triphosphate = RNA(n+1) + diphosphate. Functionally, DNA-dependent RNA polymerase catalyzes the transcription of DNA into RNA using the four ribonucleoside triphosphates as substrates. The sequence is that of DNA-directed RNA polymerase subunit beta from Francisella tularensis subsp. holarctica (strain FTNF002-00 / FTA).